We begin with the raw amino-acid sequence, 1076 residues long: Atos homolog protein A (1076 aa).

The interval 24 to 32 is transactivation domain 1 (TAD1); that stretch reads ALLITEGRT. Disordered stretches follow at residues 700–721 and 739–765; these read ESMS…TQLN and SDQL…QRRS. The span at 739-754 shows a compositional bias: basic and acidic residues; the sequence is SDQLKNEQDKQEDPTN. The segment at 878–935 is required for macropage invasion; sequence LLGNFEESVLNYRFDPLGIVDGFTAEVGASGAFCPTHLTLPVEVSFYSVSDDNAPSPY. The segment at 962-970 is transactivation domain 2 (TAD2); it reads FNPNKTVVK.

It belongs to the ATOS family.

Its subcellular location is the nucleus. Functionally, transcription regulator that syncronizes transcriptional and translational programs to promote macrophage invasion of tissues. This chain is Atos homolog protein A, found in Homo sapiens (Human).